A 512-amino-acid chain; its full sequence is Histidine ammonia-lyase (512 aa).

A cross-link (5-imidazolinone (Ala-Gly)) is located at residues 142–144; it reads ASG. S143 is modified (2,3-didehydroalanine (Ser)).

It belongs to the PAL/histidase family. Post-translationally, contains an active site 4-methylidene-imidazol-5-one (MIO), which is formed autocatalytically by cyclization and dehydration of residues Ala-Ser-Gly.

Its subcellular location is the cytoplasm. The enzyme catalyses L-histidine = trans-urocanate + NH4(+). It participates in amino-acid degradation; L-histidine degradation into L-glutamate; N-formimidoyl-L-glutamate from L-histidine: step 1/3. The sequence is that of Histidine ammonia-lyase from Allorhizobium ampelinum (strain ATCC BAA-846 / DSM 112012 / S4) (Agrobacterium vitis (strain S4)).